Consider the following 494-residue polypeptide: Membrane-bound lytic murein transglycosylase F (494 aa).

Residues 1 to 20 (MIKYLYVILLGLLLSGCQPA) form the signal peptide. The segment at 21–259 (EVVEIEASPK…HLNEKYFGHV (239 aa)) is non-LT domain. The interval 260–494 (KRFDYVDTRA…LKPKLGAGQP (235 aa)) is LT domain. Glu304 is a catalytic residue. Residues 473 to 485 (QSLASDSKTNNTL) are compositionally biased toward polar residues. The segment at 473–494 (QSLASDSKTNNTLKPKLGAGQP) is disordered.

It in the N-terminal section; belongs to the bacterial solute-binding protein 3 family. In the C-terminal section; belongs to the transglycosylase Slt family.

Its subcellular location is the cell outer membrane. The enzyme catalyses Exolytic cleavage of the (1-&gt;4)-beta-glycosidic linkage between N-acetylmuramic acid (MurNAc) and N-acetylglucosamine (GlcNAc) residues in peptidoglycan, from either the reducing or the non-reducing ends of the peptidoglycan chains, with concomitant formation of a 1,6-anhydrobond in the MurNAc residue.. In terms of biological role, murein-degrading enzyme that degrades murein glycan strands and insoluble, high-molecular weight murein sacculi, with the concomitant formation of a 1,6-anhydromuramoyl product. Lytic transglycosylases (LTs) play an integral role in the metabolism of the peptidoglycan (PG) sacculus. Their lytic action creates space within the PG sacculus to allow for its expansion as well as for the insertion of various structures such as secretion systems and flagella. This Shewanella denitrificans (strain OS217 / ATCC BAA-1090 / DSM 15013) protein is Membrane-bound lytic murein transglycosylase F.